A 273-amino-acid chain; its full sequence is Shikimate dehydrogenase (NADP(+)) (273 aa).

Shikimate contacts are provided by residues S14–S16 and T61. Residue K65 is the Proton acceptor of the active site. Residue D77 participates in NADP(+) binding. The shikimate site is built by N86 and D102. NADP(+) contacts are provided by residues G126 to A130, N150 to K155, and M213. Y215 serves as a coordination point for shikimate. Residue G237 coordinates NADP(+).

This sequence belongs to the shikimate dehydrogenase family. In terms of assembly, homodimer.

The enzyme catalyses shikimate + NADP(+) = 3-dehydroshikimate + NADPH + H(+). Its pathway is metabolic intermediate biosynthesis; chorismate biosynthesis; chorismate from D-erythrose 4-phosphate and phosphoenolpyruvate: step 4/7. Its function is as follows. Involved in the biosynthesis of the chorismate, which leads to the biosynthesis of aromatic amino acids. Catalyzes the reversible NADPH linked reduction of 3-dehydroshikimate (DHSA) to yield shikimate (SA). The chain is Shikimate dehydrogenase (NADP(+)) from Aliivibrio salmonicida (strain LFI1238) (Vibrio salmonicida (strain LFI1238)).